The primary structure comprises 161 residues: Interleukin-17F (161 aa).

The first 28 residues, 1–28, serve as a signal peptide directing secretion; sequence MKCTRETAMVKSLLLLMLGLAILREVAA. N-linked (GlcNAc...) asparagine glycosylation occurs at asparagine 83. Disulfide bonds link cysteine 100/cysteine 150 and cysteine 105/cysteine 152.

This sequence belongs to the IL-17 family. In terms of assembly, homodimer; disulfide-linked. Heterodimer with IL17A (IL17A-IL17F). Forms complexes with IL17RA and IL17RC receptors with 2:1 binding stoichiometry: two receptor chains for one interleukin molecule. IL17F homodimer forms predominantly complexes with IL17RC homodimer, whereas IL17A-IL17F favors complexes with IL17RA-IL17RC. IL17RA and IL17RC chains cannot distinguish between IL17A and IL17F molecules, potentially enabling the formation of topologically distinct complexes. Expressed by T-helper 17 cells (Th17) (at protein level). The expression pattern reflects the differentiation state. In fully differentiated Th17 cells, IL17A-IL17F heterodimers are produced at higher levels than IL17A-IL17A and IL17F-IL17F dimers. Dominantly secreted in intestine. Expressed by resident cells of the lamina propria, both epithelial cells and immune cell subsets including natural killer cells, dendritic cells, macrophages and various T and B cell subsets. Expressed by epithelial cells and innate immune cells in the colon. Expressed in group 3 innate lymphoid cells.

It localises to the secreted. Functionally, effector cytokine of innate and adaptive immune system involved in antimicrobial host defense and maintenance of tissue integrity. IL17A-IL17F signals via IL17RA-IL17RC heterodimeric receptor complex, triggering homotypic interaction of IL17RA and IL17RC chains with TRAF3IP2 adapter through SEFIR domains. This leads to downstream TRAF6-mediated activation of NF-kappa-B and MAPkinase pathways ultimately resulting in transcriptional activation of cytokines, chemokines, antimicrobial peptides and matrix metalloproteinases, with potential strong immune inflammation. IL17A-IL17F is primarily involved in host defense against extracellular bacteria and fungi by inducing neutrophilic inflammation. As signature effector cytokine of T-helper 17 cells (Th17), primarily induces neutrophil activation and recruitment at infection and inflammatory sites. Stimulates the production of antimicrobial beta-defensins DEFB1, DEFB103A, and DEFB104A by mucosal epithelial cells, limiting the entry of microbes through the epithelial barriers. IL17F homodimer can signal via IL17RC homodimeric receptor complex, triggering downstream activation of TRAF6 and NF-kappa-B signaling pathway. Via IL17RC induces transcriptional activation of IL33, a potent cytokine that stimulates group 2 innate lymphoid cells and adaptive T-helper 2 cells involved in pulmonary allergic response to fungi. Likely via IL17RC, promotes sympathetic innervation of peripheral organs by coordinating the communication between gamma-delta T cells and parenchymal cells. Stimulates sympathetic innervation of thermogenic adipose tissue by driving TGFB1 expression. Regulates the composition of intestinal microbiota and immune tolerance by inducing antimicrobial proteins that specifically control the growth of commensal Firmicutes and Bacteroidetes. The chain is Interleukin-17F (Il17f) from Mus musculus (Mouse).